We begin with the raw amino-acid sequence, 159 residues long: Cytochrome P450 monooxygenase aunB (159 aa).

Position 134 (C134) interacts with heme.

The protein belongs to the cytochrome P450 family. Requires heme as cofactor.

The catalysed reaction is 2 fonsecin B + NADPH + O2 + H(+) = aurasperone B + NADP(+) + 2 H2O. It catalyses the reaction 2 rubrofusarin B + NADPH + O2 + H(+) = aurasperone A + NADP(+) + 2 H2O. The protein operates within secondary metabolite biosynthesis. In terms of biological role, cytochrome P450 monooxygenase; part of the gene cluster that mediates the biosynthesis of aurasperone B, a dimeric gamma-naphthopyrone. The first step in the biosynthesis of aurasperone B is the production of gamma-naphthopyrone precursor YWA1 by the non-reducing polyketide synthase albA, via condensation of one acetyl-CoA starter unit with 6 malonyl-CoA units. YWA1 is then methylated by aunE at position C-6 to yield foncesin which is further methylated at position C-8 by aunD to produce fonsecin B. A key enzyme in the biosynthetic pathway is the cytochrome P450 monooxygenase aunB which catalyzes the oxidative dimerization of fonsecin B to aurasperone B. AunB also catalyzes the oxidative dimerization of rubrofusarin B into aurasperone A. The sequence is that of Cytochrome P450 monooxygenase aunB from Aspergillus niger (strain ATCC 1015 / CBS 113.46 / FGSC A1144 / LSHB Ac4 / NCTC 3858a / NRRL 328 / USDA 3528.7).